A 693-amino-acid polypeptide reads, in one-letter code: MKGRLLDAVPLSSLTGVGAALSNKLAKINLHTVQDLLLHLPLRYEDRTHLYPIGELLPGVYATVEGEVLNCNISFGGRRMMTCQISDGSGILTMRFFNFSAAMKNSLAAGRRVLAYGEAKRGKYGAEMIHPEYRVQGDLSTPELQETLTPVYPTTEGVKQATLRKLTDQALDLLDTCAIEELLPPELSQGMMTLPEALRTLHRPPPTLQLSDLETGQHPAQRRLILEELLAHNLSMLALRAGAQRFHAQPLSANDTLKNKLLAALPFKPTGAQARVVAEIERDMALDVPMMRLVQGDVGSGKTLVAALAALRAIAHGKQVALMAPTELLAEQHANNFRNWFAPLGIEVGWLAGKQKGKARLAQQEAIASGQVQMIVGTHAIFQEQVQFNGLALVIIDEQHRFGVHQRLALWEKGQQQGFHPHQLIMTATPIPRTLAMTAYADLDTSVIDELPPGRTPVTTVAIPDTRRTDIIDRVHHACITEGRQAYWVCTLIEESELLEAQAAEATWEELKLALPELNVGLVHGRMKPAEKQAVMASFKQGELHLLVATTVIEVGVDVPNASLMIIENPERLGLAQLHQLRGRVGRGAVASHCVLLYKTPLSKTAQIRLQVLRDSNDGFVIAQKDLEIRGPGELLGTRQTGNAEFKVADLLRDQAMIPEVQRLARHIHERYPQQAKALIERWMPETERYSNA.

The tract at residues 48 to 146 (THLYPIGELL…GDLSTPELQE (99 aa)) is wedge domain. The 166-residue stretch at 283–448 (DMALDVPMMR…AYADLDTSVI (166 aa)) folds into the Helicase ATP-binding domain. 296–303 (GDVGSGKT) provides a ligand contact to ATP. The DEAH box signature appears at 397–400 (DEQH). The Helicase C-terminal domain occupies 482–628 (EGRQAYWVCT…GFVIAQKDLE (147 aa)).

This sequence belongs to the helicase family. RecG subfamily. In terms of assembly, monomer in solution. Probably a monomer on HJ DNA. Binding to fork DNA is facilitated by SSB; the proteins do not seem to stably associate. It depends on Mg(2+) as a cofactor.

The enzyme catalyses Couples ATP hydrolysis with the unwinding of duplex DNA by translocating in the 3'-5' direction.. The catalysed reaction is ATP + H2O = ADP + phosphate + H(+). Functionally, plays a critical role in recombination and DNA repair. Helps process Holliday junction (HJ) intermediates to mature products by catalyzing branch migration. Has replication fork regression activity, unwinds stalled or blocked replication forks to make a HJ that can be resolved by RuvC or RusA. Also rewinds unwound dsDNA in an ATP-dependent manner. Has double-stranded (ds)DNA unwinding activity characteristic of a DNA helicase with 3'-5' polarity in vitro on linear dsDNA; branched duplex DNA (Y-DNA) substrates adopt different conformations that influence which of the two arms are unwound. Binds and unwinds HJ and Y-DNA but not linear duplex DNA; binds no more than 10 nucleotides of ssDNA at a fork. Has a role in constitutive stable DNA replication (cSDR, DNA replication in the absence of protein synthesis) and R-loop (RNA annealed with dsDNA) formation. Unwinds R-loops but not RNA:DNA hybrids. Is genetically synergistic to RadA and RuvABC. The protein is ATP-dependent DNA helicase RecG of Escherichia coli (strain K12).